A 473-amino-acid chain; its full sequence is MKLSMPRFDQAPVLVVGDVMLDRYWHGGTSRISPEAPVPVVKVEQIEDRPGGAANVALNIAALGAPAALVGVTGEDEARQSLVDSLAAAGVRAHFQCLEHQPTIVKLRVMSRHQQLLRMDFEEPFDTDPAALLTDVESLLAGVKVLVLSDYGKGALKNHQALIQAARRHGIPVLADPKGKDFEIYRGASLITPNLGEFEAIVGHCADEAELVAKGAELMRQLELGALLVTRGEHGMTLLRPEHAPLHLPARAREVFDVTGAGDTVISTLAASLAAGEELPQAVALANLAAGIVVGKLGTAAISAPELRRAVQREEGSERGVMTVEQLLTVVEDARAQGEKIVFTNGCFDILHAGHVTYLEQARAQGDRLVVAVNDDGSVSRLKGPGRPINSVDRRMAVLAGLEAVDWVVCFAEDTPENLLAQVRPDVLVKGGDYGVDQVVGADLVKAYGGVVKVLGLVENSSTTAIVEKIRKA.

The interval 1–318 is ribokinase; sequence MKLSMPRFDQ…RAVQREEGSE (318 aa). 194 to 197 is an ATP binding site; sequence NLGE. The active site involves D263. A cytidylyltransferase region spans residues 343-473; it reads FTNGCFDILH…TAIVEKIRKA (131 aa).

This sequence in the N-terminal section; belongs to the carbohydrate kinase PfkB family. In the C-terminal section; belongs to the cytidylyltransferase family. In terms of assembly, homodimer.

It carries out the reaction D-glycero-beta-D-manno-heptose 7-phosphate + ATP = D-glycero-beta-D-manno-heptose 1,7-bisphosphate + ADP + H(+). The catalysed reaction is D-glycero-beta-D-manno-heptose 1-phosphate + ATP + H(+) = ADP-D-glycero-beta-D-manno-heptose + diphosphate. Its pathway is nucleotide-sugar biosynthesis; ADP-L-glycero-beta-D-manno-heptose biosynthesis; ADP-L-glycero-beta-D-manno-heptose from D-glycero-beta-D-manno-heptose 7-phosphate: step 1/4. It functions in the pathway nucleotide-sugar biosynthesis; ADP-L-glycero-beta-D-manno-heptose biosynthesis; ADP-L-glycero-beta-D-manno-heptose from D-glycero-beta-D-manno-heptose 7-phosphate: step 3/4. Catalyzes the phosphorylation of D-glycero-D-manno-heptose 7-phosphate at the C-1 position to selectively form D-glycero-beta-D-manno-heptose-1,7-bisphosphate. In terms of biological role, catalyzes the ADP transfer from ATP to D-glycero-beta-D-manno-heptose 1-phosphate, yielding ADP-D-glycero-beta-D-manno-heptose. The polypeptide is Bifunctional protein HldE (Stutzerimonas stutzeri (strain A1501) (Pseudomonas stutzeri)).